The sequence spans 404 residues: uncharacterized protein (404 aa).

The segment covering 262–278 (VSTGDTSPCGTEDSSPA) has biased composition (polar residues). Disordered stretches follow at residues 262-307 (VSTG…SPSL) and 319-340 (MKKS…SGAD). 3 positions are modified to phosphoserine: Ser268, Ser276, and Ser279. A phosphothreonine mark is found at Thr290 and Thr293. A phosphoserine mark is found at Ser304, Ser306, Ser324, Ser358, and Ser362. Residues 319–336 (MKKSHSANDSEEFFREDD) are compositionally biased toward basic and acidic residues.

This is an uncharacterized protein from Mus musculus (Mouse).